A 329-amino-acid chain; its full sequence is Cytosolic arginine sensor for mTORC1 subunit 2 (329 aa).

2 consecutive ACT domains span residues 72-140 and 262-322; these read ADAT…HTLS and ELWK…SALK.

Belongs to the GATS family. Forms homodimers and heterodimers with CASTOR1. Interacts with the GATOR2 complex which is composed of MIOS, SEC13, SEH1L, WDR24 and WDR59; the interaction is not regulated by arginine. As to expression, widely expressed.

The protein resides in the cytoplasm. It is found in the cytosol. In terms of biological role, functions as a negative regulator of the TORC1 signaling pathway through the GATOR complex. As part of homodimers or heterodimers with CASTOR1, directly binds and inhibits the GATOR subcomplex GATOR2 and thereby mTORC1. Does not directly bind arginine, but binding of arginine to CASTOR1 disrupts the interaction of CASTOR2-containing heterodimers with GATOR2 which can in turn activate mTORC1 and the TORC1 signaling pathway. The protein is Cytosolic arginine sensor for mTORC1 subunit 2 of Homo sapiens (Human).